Reading from the N-terminus, the 304-residue chain is MCTLGHKPDNSLVSNAFGFLRLPLDFMPYDGDADWVITGVPFDMATSGRAGGRHGPAAIRQVSTNLAWEGKRWPWNFDMRDRLKVVDCGDVVFSFGDAQEMSDNLQAHAERLLASGKRCLTFGGDHFITLPLLRAHAKHFGKMALVHFDAHTDTYAHGSKFDHGTMFFHAPNEGLIDPQHSVQIGIRTEYDHDNGFTVLDAAQVNDRSVEDVLAEVKRIVGDLPVYLTFDIDCLDPAHAPGTGTPVIGGLTSDRALKLVRGLQDLDIVGMDVVEVAPAYDQSEITALAAATLALEMLYIQAAKK.

6 residues coordinate Mn(2+): histidine 126, aspartate 149, histidine 151, aspartate 153, aspartate 230, and aspartate 232.

Belongs to the arginase family. Agmatinase subfamily. The cofactor is Mn(2+).

The catalysed reaction is agmatine + H2O = urea + putrescine. It participates in amine and polyamine biosynthesis; putrescine biosynthesis via agmatine pathway; putrescine from agmatine: step 1/1. Functionally, catalyzes the formation of putrescine from agmatine. The chain is Agmatinase from Edwardsiella ictaluri (strain 93-146).